The primary structure comprises 386 residues: GTPase Obg (386 aa).

An Obg domain is found at Ser4–Leu162. The segment at Lys18–Arg44 is disordered. Residues Ala163–Asn329 form the OBG-type G domain. GTP contacts are provided by residues Gly169 to Ser176, Phe194 to Glu198, Asp216 to Gly219, Thr283 to Asp286, and Ser310 to Ile312. Residues Ser176 and Thr196 each coordinate Mg(2+). Residues Tyr357–Lys386 form a disordered region.

It belongs to the TRAFAC class OBG-HflX-like GTPase superfamily. OBG GTPase family. Monomer. The cofactor is Mg(2+).

It is found in the cytoplasm. In terms of biological role, an essential GTPase which binds GTP, GDP and possibly (p)ppGpp with moderate affinity, with high nucleotide exchange rates and a fairly low GTP hydrolysis rate. Plays a role in control of the cell cycle, stress response, ribosome biogenesis and in those bacteria that undergo differentiation, in morphogenesis control. This Parabacteroides distasonis (strain ATCC 8503 / DSM 20701 / CIP 104284 / JCM 5825 / NCTC 11152) protein is GTPase Obg.